The primary structure comprises 377 residues: Prostaglandin reductase-3 (377 aa).

At Lys-35 the chain carries N6-acetyllysine. NADP(+) contacts are provided by Thr-185, Ser-205, Lys-209, Tyr-224, Ser-247, Ile-269, and Tyr-275. Ser-299 carries the phosphoserine modification. NADP(+)-binding positions include 303 to 305 (FFL) and Asn-361.

This sequence belongs to the zinc-containing alcohol dehydrogenase family. Quinone oxidoreductase subfamily. Widely expressed.

Its subcellular location is the peroxisome. It catalyses the reaction 13,14-dihydro-15-oxo-prostaglandin E2 + NADP(+) = 15-oxoprostaglandin E2 + NADPH + H(+). It carries out the reaction 13,14-dihydro-15-oxo-prostaglandin E1 + NADP(+) = 15-oxoprostaglandin E1 + NADPH + H(+). The catalysed reaction is 13,14-dihydro-15-oxo-PGF2alpha + NADP(+) = 15-oxoprostaglandin F2alpha + NADPH + H(+). The enzyme catalyses 13,14-dihydro-15-oxo-prostaglandin F1alpha + NADP(+) = 15-oxoprostaglandin F1alpha + NADPH + H(+). Functions as 15-oxo-prostaglandin 13-reductase and acts on 15-keto-PGE1, 15-keto-PGE2, 15-keto-PGE1-alpha and 15-keto-PGE2-alpha with highest efficiency towards 15-keto-PGE2-alpha. Overexpression represses transcriptional activity of PPARG and inhibits adipocyte differentiation. In Mus musculus (Mouse), this protein is Prostaglandin reductase-3.